Consider the following 176-residue polypeptide: MAMTGLNTAGSDRDYDTQSLNRELQDKGFLLTTTEDLINWARTGSLHWMTFGLACCAVEMMHTSMPRYDVERFGVAPRASPRQSDVMIVAGTLTNKMAPALRKVYDQMPEPRYVISMGSCANGGGYYHYSYSVVRGCDRIVPVDIYVPGCPPTAEALLYGILQLQRKIRRTGTITR.

Cys-55, Cys-56, Cys-120, and Cys-150 together coordinate [4Fe-4S] cluster.

This sequence belongs to the complex I 20 kDa subunit family. As to quaternary structure, NDH-1 is composed of 14 different subunits. Subunits NuoB, C, D, E, F, and G constitute the peripheral sector of the complex. It depends on [4Fe-4S] cluster as a cofactor.

It localises to the cell inner membrane. It catalyses the reaction a quinone + NADH + 5 H(+)(in) = a quinol + NAD(+) + 4 H(+)(out). NDH-1 shuttles electrons from NADH, via FMN and iron-sulfur (Fe-S) centers, to quinones in the respiratory chain. Couples the redox reaction to proton translocation (for every two electrons transferred, four hydrogen ions are translocated across the cytoplasmic membrane), and thus conserves the redox energy in a proton gradient. This is NADH-quinone oxidoreductase subunit B 1 from Cereibacter sphaeroides (strain ATCC 17029 / ATH 2.4.9) (Rhodobacter sphaeroides).